We begin with the raw amino-acid sequence, 311 residues long: Nuclear hormone receptor family member nhr-111 (311 aa).

Positions 39-115 form a DNA-binding region, nuclear receptor; that stretch reads ITLCAVCGDT…KGMNKNAVQP (77 aa). 2 consecutive NR C4-type zinc fingers follow at residues 42–62 and 78–98; these read CAVC…CFGC and CWNG…CKSC. The region spanning 116 to 311 is the NR LBD domain; the sequence is ERTSHSYTVE…KACEIVISFL (196 aa).

This sequence belongs to the nuclear hormone receptor family.

Its subcellular location is the nucleus. Orphan nuclear receptor. The protein is Nuclear hormone receptor family member nhr-111 (nhr-111) of Caenorhabditis elegans.